The sequence spans 363 residues: Ankyrin repeat domain-containing protein 40 (363 aa).

Methionine 1 is subject to N-acetylmethionine. ANK repeat units follow at residues glutamate 9–serine 38 and asparagine 43–isoleucine 72. The segment at aspartate 135–leucine 167 is disordered. Positions proline 144 to glutamate 164 are enriched in pro residues. At serine 176 the chain carries Phosphoserine.

The protein is Ankyrin repeat domain-containing protein 40 (Ankrd40) of Mus musculus (Mouse).